The primary structure comprises 115 residues: U3-lycotoxin-Ls1a (115 aa).

A signal peptide spans 1–20; it reads MKFVLLFGVLLLTLFSYSSA. A propeptide spanning residues 21–44 is cleaved from the precursor; sequence EMLDDFDQADEDELLSLIEKEEAR. 4 cysteine pairs are disulfide-bonded: Cys48–Cys63, Cys55–Cys72, Cys62–Cys87, and Cys74–Cys85.

This sequence belongs to the neurotoxin 19 (CSTX) family. 01 subfamily. Expressed by the venom gland.

It localises to the secreted. The sequence is that of U3-lycotoxin-Ls1a from Lycosa singoriensis (Wolf spider).